A 235-amino-acid chain; its full sequence is Eukaryotic translation initiation factor 4E-1 (235 aa).

A disordered region spans residues 1 to 36; the sequence is MVVEETIKATSTEDLSNTIANQNPRGRGGDEDEELE. Residues 8-24 show a composition bias toward polar residues; that stretch reads KATSTEDLSNTIANQNP. 2 EIF4G-binding regions span residues 60–63 and 70–106; these read HPLE and FDNPSAKSKQATWGASIRPIYTFSTVEEFWSVYNNIH. Residues 78–83, K110, and 128–129 contribute to the mRNA site; these read KQATWG and WE. A disulfide bond links C133 and C171. Positions 154-163 are EIF4G-binding; sequence YTLLAMIGEQ. MRNA contacts are provided by residues 178-183 and 223-227; these read RSGQDK and KKFDR.

The protein belongs to the eukaryotic initiation factor 4E family. EIF4F is a multi-subunit complex, the composition of which varies with external and internal environmental conditions. It is composed of at least EIF4A, EIF4E and EIF4G. EIF4E is also known to interact with other partners. In higher plants two isoforms of EIF4F have been identified, named isoform EIF4F and isoform EIF(iso)4F. Isoform EIF4F has subunits p220 and p26, whereas isoform EIF(iso)4F has subunits p82 and p28. As to quaternary structure, (Microbial infection) Interacts with potyvirus viral genome-linked protein (VPg); this interaction is possible in susceptible hosts but impaired in resistant plants. According to the redox status, the Cys-133-Cys-171 disulfide bridge may have a role in regulating protein function by affecting its ability to bind capped mRNA.

Its subcellular location is the nucleus. It localises to the cytoplasm. Component of the protein complex eIF4F, which is involved in the recognition of the mRNA cap, ATP-dependent unwinding of 5'-terminal secondary structure and recruitment of mRNA to the ribosome. Recognizes and binds the 7-methylguanosine-containing mRNA cap during an early step in the initiation of protein synthesis and facilitates ribosome binding by inducing the unwinding of the mRNAs secondary structures. Key component of recessive resistance to potyviruses. Its function is as follows. (Microbial infection) Susceptibility host factor required for viral infection by recruiting viral RNAs to the host ribosomal complex via an interaction with viral genome-linked protein (VPg). The protein is Eukaryotic translation initiation factor 4E-1 of Citrullus lanatus (Watermelon).